Consider the following 887-residue polypeptide: Putative RNA-binding protein 15B (887 aa).

The interval 1 to 132 is disordered; it reads MKRQSERDSS…EPAGPGSTAA (132 aa). Over residues 10–20 the composition is skewed to low complexity; sequence SPSGRGSSSSA. Composition is skewed to basic and acidic residues over residues 22-34 and 65-77; these read RPRE…EAGG and GHRD…DANH. A compositionally biased stretch (gly residues) spans 83-94; it reads RSSGAPGGGGRT. The span at 95–110 shows a compositional bias: low complexity; it reads GKASGDPGAGGASPRA. Phosphoserine is present on residues Ser-107 and Ser-111. A compositionally biased stretch (pro residues) spans 111–122; the sequence is SPLPPPPPPPGA. The segment covering 123-132 has biased composition (low complexity); it reads EPAGPGSTAA. The RRM 1 domain occupies 136 to 216; it reads KTLLISSLSP…RPLKVEPVYL (81 aa). Lys-210 is covalently cross-linked (Glycyl lysine isopeptide (Lys-Gly) (interchain with G-Cter in SUMO2)). The tract at residues 215 to 249 is disordered; the sequence is YLRGGGSSRRSSSSSAAASTPPPGPPAPADPLGYL. Low complexity predominate over residues 222 to 233; the sequence is SRRSSSSSAAAS. Positions 234–243 are enriched in pro residues; it reads TPPPGPPAPA. 2 positions are modified to phosphoserine: Ser-261 and Ser-263. 2 RRM domains span residues 333–410 and 414–488; these read RNLF…YGKA and TRLW…FAKA. Residue Thr-529 is modified to Phosphothreonine. Phosphoserine is present on residues Ser-549, Ser-553, and Ser-559. The interval 549–703 is disordered; sequence SLSKSSDRRN…TLEEPKHETK (155 aa). Basic and acidic residues-rich tracts occupy residues 570 to 613, 623 to 643, and 668 to 700; these read RSGE…ERSR, RGSD…EGTK, and EAPD…EPKH. The short motif at 590–594 is the Nuclear localization signal element; that stretch reads RRKRR. Lys-699 participates in a covalent cross-link: Glycyl lysine isopeptide (Lys-Gly) (interchain with G-Cter in SUMO2). The SPOC domain occupies 708–886; sequence LSEYAQTLQL…HMVIVIVRDT (179 aa). The interval 719 to 887 is interaction with Epstein-Barr virus BMLF1; sequence WNGLLVLKNS…MVIVIVRDTA (169 aa).

This sequence belongs to the RRM Spen family. Component of the WMM complex, a N6-methyltransferase complex composed of a catalytic subcomplex, named MAC, and of an associated subcomplex, named MACOM. The MAC subcomplex is composed of METTL3 and METTL14. The MACOM subcomplex is composed of WTAP, ZC3H13, CBLL1/HAKAI, VIRMA, and, in some cases of RBM15 (RBM15 or RBM15B). May interact with NCOR2. Interacts with NXF1, the interaction is required to promote mRNA export.

It is found in the nucleus. The protein resides in the nucleoplasm. Its subcellular location is the nucleus speckle. The protein localises to the nucleus envelope. In terms of biological role, RNA-binding protein that acts as a key regulator of N6-methyladenosine (m6A) methylation of RNAs, thereby regulating different processes, such as alternative splicing of mRNAs and X chromosome inactivation mediated by Xist RNA. Associated component of the WMM complex, a complex that mediates N6-methyladenosine (m6A) methylation of RNAs, a modification that plays a role in the efficiency of mRNA splicing and RNA processing. Plays a key role in m6A methylation, possibly by binding target RNAs and recruiting the WMM complex. Involved in random X inactivation mediated by Xist RNA: acts by binding Xist RNA and recruiting the WMM complex, which mediates m6A methylation, leading to target YTHDC1 reader on Xist RNA and promoting transcription repression activity of Xist. Functions in the regulation of alternative or illicit splicing, possibly by regulating m6A methylation. Inhibits pre-mRNA splicing. Also functions as a mRNA export factor by acting as a cofactor for the nuclear export receptor NXF1. This chain is Putative RNA-binding protein 15B (Rbm15b), found in Mus musculus (Mouse).